The sequence spans 697 residues: Potassium-transporting ATPase ATP-binding subunit (697 aa).

Transmembrane regions (helical) follow at residues 55 to 75 (PIMF…FLPS), 79 to 99 (SIPG…VLFA), 245 to 265 (LTLI…YLGF), and 271 to 291 (VLVA…LSAI). Residue aspartate 324 is the 4-aspartylphosphate intermediate of the active site. ATP is bound by residues aspartate 361, glutamate 365, 393–400 (FKAETRMS), and lysine 412. Positions 535 and 539 each coordinate Mg(2+). The next 3 membrane-spanning stretches (helical) occupy residues 605–625 (FAII…LNIM), 633–653 (AILS…PLAM), and 677–697 (GGVI…GLFI).

The protein belongs to the cation transport ATPase (P-type) (TC 3.A.3) family. Type IA subfamily. In terms of assembly, the system is composed of three essential subunits: KdpA, KdpB and KdpC.

The protein resides in the cell membrane. The catalysed reaction is K(+)(out) + ATP + H2O = K(+)(in) + ADP + phosphate + H(+). Functionally, part of the high-affinity ATP-driven potassium transport (or Kdp) system, which catalyzes the hydrolysis of ATP coupled with the electrogenic transport of potassium into the cytoplasm. This subunit is responsible for energy coupling to the transport system and for the release of the potassium ions to the cytoplasm. The chain is Potassium-transporting ATPase ATP-binding subunit from Bacillus anthracis (strain CDC 684 / NRRL 3495).